Consider the following 166-residue polypeptide: Lipoprotein signal peptidase (166 aa).

3 consecutive transmembrane segments (helical) span residues 12 to 32 (WLWV…LILQ), 70 to 90 (WFFS…MYRS), and 102 to 122 (ALII…GFVV). Catalysis depends on residues D123 and D141. Residues 137 to 157 (FNLADSAICIGAALIVLEGFL) traverse the membrane as a helical segment.

Belongs to the peptidase A8 family.

The protein resides in the cell inner membrane. It catalyses the reaction Release of signal peptides from bacterial membrane prolipoproteins. Hydrolyzes -Xaa-Yaa-Zaa-|-(S,diacylglyceryl)Cys-, in which Xaa is hydrophobic (preferably Leu), and Yaa (Ala or Ser) and Zaa (Gly or Ala) have small, neutral side chains.. It participates in protein modification; lipoprotein biosynthesis (signal peptide cleavage). Functionally, this protein specifically catalyzes the removal of signal peptides from prolipoproteins. The chain is Lipoprotein signal peptidase from Klebsiella pneumoniae (strain 342).